The following is a 554-amino-acid chain: Serine/threonine-protein phosphatase 2B catalytic subunit (554 aa).

Positions 119, 121, and 147 each coordinate Fe cation. Zn(2+)-binding residues include Asp-147 and Asn-179. The active-site Proton donor is His-180. Positions 228 and 310 each coordinate Zn(2+). Residues 411 to 433 (LKESAPTQHKQPAPSENENKADQ) are disordered. The segment covering 415 to 426 (APTQHKQPAPSE) has biased composition (polar residues).

Belongs to the PPP phosphatase family. PP-2B subfamily. As to quaternary structure, composed of two components (A and B), the A component is the catalytic subunit and the B component confers calcium sensitivity. Requires Fe(3+) as cofactor. The cofactor is Zn(2+).

The enzyme catalyses O-phospho-L-seryl-[protein] + H2O = L-seryl-[protein] + phosphate. It catalyses the reaction O-phospho-L-threonyl-[protein] + H2O = L-threonyl-[protein] + phosphate. Its function is as follows. Calcium-dependent, calmodulin-stimulated protein phosphatase. This subunit may have a role in the calmodulin activation of calcineurin. Appears to be involved in cytokinesis, mating, transport, nuclear and spindle pole body positioning, and cell shape. The sequence is that of Serine/threonine-protein phosphatase 2B catalytic subunit (ppb1) from Schizosaccharomyces pombe (strain 972 / ATCC 24843) (Fission yeast).